Consider the following 144-residue polypeptide: HTH-type transcriptional regulator BilQ (144 aa).

One can recognise an HTH marR-type domain in the interval 1 to 134; that stretch reads MEQTFAYYTT…LFTLLQKLGK (134 aa). A DNA-binding region (H-T-H motif) is located at residues 48–71; the sequence is QRELAAAVRADEGYAARSVEKLLQ.

Transcription regulator that regulates expression of the bilirubin reductase operon (bilQ, bilR and bilS). The chain is HTH-type transcriptional regulator BilQ from Clostridium symbiosum (strain WAL-14163).